The chain runs to 155 residues: Archaemetzincin (155 aa).

Histidine 109 contacts Zn(2+). Glutamate 110 (proton acceptor) is an active-site residue. Zn(2+)-binding residues include histidine 113, histidine 119, cysteine 120, cysteine 125, cysteine 144, and cysteine 147.

Belongs to the peptidase M54 family. In terms of assembly, monomer. Zn(2+) serves as cofactor.

Functionally, probable zinc metalloprotease whose natural substrate is unknown. This is Archaemetzincin from Pyrobaculum aerophilum (strain ATCC 51768 / DSM 7523 / JCM 9630 / CIP 104966 / NBRC 100827 / IM2).